The sequence spans 269 residues: 3-methyl-2-oxobutanoate hydroxymethyltransferase (269 aa).

2 residues coordinate Mg(2+): Asp49 and Asp88. 3-methyl-2-oxobutanoate contacts are provided by residues 49 to 50 (DS), Asp88, and Lys118. Glu120 provides a ligand contact to Mg(2+). Residue Glu186 is the Proton acceptor of the active site.

This sequence belongs to the PanB family. In terms of assembly, homodecamer; pentamer of dimers. Mg(2+) serves as cofactor.

The protein resides in the cytoplasm. It catalyses the reaction 3-methyl-2-oxobutanoate + (6R)-5,10-methylene-5,6,7,8-tetrahydrofolate + H2O = 2-dehydropantoate + (6S)-5,6,7,8-tetrahydrofolate. It participates in cofactor biosynthesis; (R)-pantothenate biosynthesis; (R)-pantoate from 3-methyl-2-oxobutanoate: step 1/2. Catalyzes the reversible reaction in which hydroxymethyl group from 5,10-methylenetetrahydrofolate is transferred onto alpha-ketoisovalerate to form ketopantoate. In Pelobacter propionicus (strain DSM 2379 / NBRC 103807 / OttBd1), this protein is 3-methyl-2-oxobutanoate hydroxymethyltransferase.